The sequence spans 285 residues: Sulfur carrier protein TtuD (285 aa).

Rhodanese domains follow at residues 20 to 127 (EDPK…PLTT) and 161 to 281 (KEGK…VPIA). At Cys240 the chain carries Cysteine persulfide.

In terms of processing, cys-240 can accept a sulfur atom as persulfide forms from cysteine desulfurases IscS and SufS.

The protein operates within tRNA modification. In terms of biological role, required for the efficient 2-thiolation of 5-methyluridine residue at position 54 in the T loop of tRNAs, leading to 5-methyl-2-thiouridine (m(5)s(2)U or s(2)T). TtuD is a sulfur carrier protein that has a role to direct sulfur flow from cysteine desulfurases to m(5)s(2)U synthesis in vivo. It enhances the cysteine desulfurase activity of IscS and SufS, as well as the formation of thiocarboxylated TtuB (TtuB-COSH) in the presence of these desulfurases. This is Sulfur carrier protein TtuD from Thermus thermophilus (strain ATCC BAA-163 / DSM 7039 / HB27).